Here is a 130-residue protein sequence, read N- to C-terminus: Small ribosomal subunit protein uS8 (130 aa).

It belongs to the universal ribosomal protein uS8 family. Part of the 30S ribosomal subunit.

Functionally, one of the primary rRNA binding proteins, it binds directly to 16S rRNA central domain where it helps coordinate assembly of the platform of the 30S subunit. In Methanothermococcus thermolithotrophicus (Methanococcus thermolithotrophicus), this protein is Small ribosomal subunit protein uS8.